The primary structure comprises 507 residues: Transcription factor NIGTH1 (507 aa).

Disordered regions lie at residues 139 to 172 (ASAA…TALD) and 238 to 268 (SREA…RKAR). The span at 152-161 (PKEHSEHHPL) shows a compositional bias: basic and acidic residues. The HTH myb-type domain maps to 263–323 (PHRKARRCWS…HLQKYRLHTR (61 aa)). Positions 294 to 319 (PKQIRELMKVDGLTNDEVKSHLQKYR) form a DNA-binding region, H-T-H motif. Positions 402-507 (AVAPPPPLPP…TTTSAGAINY (106 aa)) are disordered. Residues 412 to 433 (QQQLAPPYSAKSSASARLGSPD) show a composition bias toward low complexity. Residues 437 to 446 (RGSGGGGGAA) are compositionally biased toward gly residues. The segment covering 456–476 (ESIEEEGEGEEREDDDDDDEM) has biased composition (acidic residues).

Interacts with ACA5.

Its subcellular location is the nucleus. Functionally, probable transcription factor that may play a role in regulatory networks controlling development and metabolism. This Oryza sativa subsp. japonica (Rice) protein is Transcription factor NIGTH1.